A 154-amino-acid polypeptide reads, in one-letter code: Myoglobin (154 aa).

The region spanning 2–148 (GLSDGEWQLV…FRKDIAAKYK (147 aa)) is the Globin domain. The residue at position 4 (Ser4) is a Phosphoserine. His65 lines the nitrite pocket. His65 contacts O2. A Phosphothreonine modification is found at Thr68. Residue His94 coordinates heme b.

This sequence belongs to the globin family. Monomeric.

It localises to the cytoplasm. The protein resides in the sarcoplasm. It catalyses the reaction Fe(III)-heme b-[protein] + nitric oxide + H2O = Fe(II)-heme b-[protein] + nitrite + 2 H(+). It carries out the reaction H2O2 + AH2 = A + 2 H2O. Its function is as follows. Monomeric heme protein which primary function is to store oxygen and facilitate its diffusion within muscle tissues. Reversibly binds oxygen through a pentacoordinated heme iron and enables its timely and efficient release as needed during periods of heightened demand. Depending on the oxidative conditions of tissues and cells, and in addition to its ability to bind oxygen, it also has a nitrite reductase activity whereby it regulates the production of bioactive nitric oxide. Under stress conditions, like hypoxia and anoxia, it also protects cells against reactive oxygen species thanks to its pseudoperoxidase activity. This is Myoglobin (MB) from Castor fiber (Eurasian beaver).